A 225-amino-acid chain; its full sequence is ATP-dependent dethiobiotin synthetase BioD (225 aa).

15-20 provides a ligand contact to ATP; sequence EIGKTF. Thr-19 is a Mg(2+) binding site. Lys-40 is a catalytic residue. Residues Asp-57, 118–121, 178–179, and 207–209 each bind ATP; these read EGVG, NR, and PHV. 2 residues coordinate Mg(2+): Asp-57 and Glu-118.

Belongs to the dethiobiotin synthetase family. As to quaternary structure, homodimer. Mg(2+) is required as a cofactor.

The protein resides in the cytoplasm. It catalyses the reaction (7R,8S)-7,8-diammoniononanoate + CO2 + ATP = (4R,5S)-dethiobiotin + ADP + phosphate + 3 H(+). Its pathway is cofactor biosynthesis; biotin biosynthesis; biotin from 7,8-diaminononanoate: step 1/2. Its function is as follows. Catalyzes a mechanistically unusual reaction, the ATP-dependent insertion of CO2 between the N7 and N8 nitrogen atoms of 7,8-diaminopelargonic acid (DAPA, also called 7,8-diammoniononanoate) to form a ureido ring. In Aromatoleum aromaticum (strain DSM 19018 / LMG 30748 / EbN1) (Azoarcus sp. (strain EbN1)), this protein is ATP-dependent dethiobiotin synthetase BioD.